Here is a 136-residue protein sequence, read N- to C-terminus: Protein NrdI (136 aa).

Belongs to the NrdI family.

Probably involved in ribonucleotide reductase function. This is Protein NrdI from Klebsiella pneumoniae (strain 342).